The following is a 326-amino-acid chain: Protoheme IX farnesyltransferase (326 aa).

Helical transmembrane passes span 35–55, 60–80, 106–126, 129–149, 157–177, 185–205, 242–262, and 283–303; these read LIPL…GWPL, LVCT…LNCL, SAFI…VSGV, LAAG…TALL, IVIG…AATG, WLFA…ALLL, GFGV…LLPF, and AKGL…LLIL.

Belongs to the UbiA prenyltransferase family. Protoheme IX farnesyltransferase subfamily.

It is found in the cell inner membrane. The catalysed reaction is heme b + (2E,6E)-farnesyl diphosphate + H2O = Fe(II)-heme o + diphosphate. Its pathway is porphyrin-containing compound metabolism; heme O biosynthesis; heme O from protoheme: step 1/1. Its function is as follows. Converts heme B (protoheme IX) to heme O by substitution of the vinyl group on carbon 2 of heme B porphyrin ring with a hydroxyethyl farnesyl side group. The sequence is that of Protoheme IX farnesyltransferase from Parasynechococcus marenigrum (strain WH8102).